A 29-amino-acid chain; its full sequence is Brevinin-2Ra (29 aa).

Cysteine 23 and cysteine 29 are oxidised to a cystine.

Expressed by the skin glands.

It localises to the secreted. Its function is as follows. Antimicrobial peptide. The polypeptide is Brevinin-2Ra (Pelophylax ridibundus (Marsh frog)).